We begin with the raw amino-acid sequence, 347 residues long: GMP reductase (347 aa).

108–131 (AEFEKVKKIMALSEEFVFICIDIA) provides a ligand contact to NADP(+). The K(+) site is built by glycine 181 and glycine 183. Cysteine 186 acts as the Thioimidate intermediate in catalysis. 216–239 (IIGDGGCSCAGDVSKAFGGGADFV) contacts NADP(+).

The protein belongs to the IMPDH/GMPR family. GuaC type 1 subfamily. As to quaternary structure, homotetramer.

The catalysed reaction is IMP + NH4(+) + NADP(+) = GMP + NADPH + 2 H(+). Catalyzes the irreversible NADPH-dependent deamination of GMP to IMP. It functions in the conversion of nucleobase, nucleoside and nucleotide derivatives of G to A nucleotides, and in maintaining the intracellular balance of A and G nucleotides. This chain is GMP reductase, found in Vibrio atlanticus (strain LGP32) (Vibrio splendidus (strain Mel32)).